The chain runs to 297 residues: HTH-type transcriptional regulator ArgP (297 aa).

Positions 4–60 (PDYRTLQALDAVIRERGFERAAQKLCITQSAVSQRIKQLENMFGQPLLVRTVPPRPT) constitute an HTH lysR-type domain. A DNA-binding region (H-T-H motif) is located at residues 21–40 (FERAAQKLCITQSAVSQRIK).

It belongs to the LysR transcriptional regulatory family. In terms of assembly, homodimer.

In terms of biological role, controls the transcription of genes involved in arginine and lysine metabolism. In Escherichia coli O7:K1 (strain IAI39 / ExPEC), this protein is HTH-type transcriptional regulator ArgP.